We begin with the raw amino-acid sequence, 534 residues long: MLHCSFLRVIPIKNASKRLIIVRSLTSAPAKTSEAEKQQDSLKNIDAGEKYTALGNIRQKKDVFHYTDRASGVGYSHYSSSVYQHRPYIWPPLRKLYHWNYALVIAGMVILMSDFEWLKDQIKSASLPFRPEASQKEEVTESNGEVEEVKEKPKKKKLGFRERRIIEYEDRLRLYSTPDKIFRYFATLKIIDPNEDSGRFEVFMTPEDFLRSFTPGVMQPRRWGLDSFKNYNPEKHKRHKFSDPDSIFYKLGENGLINFSDYLFLMTLLSTSHADFALAFKIFDVDGNGALDKEEFTKVQQLIMSQTTVGQRHRDHITPNQSFRVETNSALETYFFGKDGKGSLSSEKFIEFQERLQHDILKMEFERRDALDNPDGLINEDSFAQLLLLHAQINEKKQKHMLKRVKRRFKGENLKGISFGETKAFFEFLYHIDDVDIALHFHKMAGMSIDAKLLQRVAVKVTGIPLSDHVVDVVITLFDDNLDGKLSHEEMVAVMRRRMRRGLERPRDTGLFRLFDAVLECGKRAYHASPLPFY.

Residues 1–32 (MLHCSFLRVIPIKNASKRLIIVRSLTSAPAKT) constitute a mitochondrion transit peptide. The segment at 131-150 (PEASQKEEVTESNGEVEEVK) is disordered. EF-hand domains lie at 271–306 (TSHA…IMSQ), 338–359 (KDGK…LQHD), and 466–501 (LSDH…RMRR). Positions 284, 286, 288, and 295 each coordinate Ca(2+).

It belongs to the MICU1 family. MICU1 subfamily. In terms of tissue distribution, expressed at low levels in PLM touch receptor neurons, germ cells, epidermis, and muscles.

Its subcellular location is the mitochondrion intermembrane space. The protein localises to the mitochondrion inner membrane. Calcium sensor of the mitochondrial calcium uniporter (mcu-1) channel, which senses calcium level via its EF-hand domains. At low calcium levels, micu-1 occludes the pore of the mcu-1 channel, preventing mitochondrial calcium uptake. At higher calcium levels, calcium-binding to micu-1 induces a conformational change that weakens mcu-1-micu-1 interactions and moves micu-1 away from the pore, allowing calcium permeation through the mcu-1 channel. Also required to protect against manganese toxicity by preventing manganese uptake by mcu-1. Modulates the activity of the mitochondrial calcium uniporter protein mcu-1 depending on the level of intracellular calcium in PLM touch receptor neurons following axonal injury. This is Calcium uptake protein 1 homolog, mitochondrial from Caenorhabditis elegans.